A 156-amino-acid chain; its full sequence is RNA polymerase sigma factor SigS (156 aa).

A Polymerase core binding motif is present at residues 29–44; sequence EYYQLLLIKMWQLSQI. Residues 126–145 constitute a DNA-binding region (H-T-H motif); it reads QFEIAEIMSLSLSTIKLIKM.

Belongs to the sigma-70 factor family.

In terms of biological role, sigma factors are initiation factors that promote the attachment of RNA polymerase to specific initiation sites and are then released. Sigma-S contributes to the protection against external stress, thus playing a role in cellular fitness and survival. The sequence is that of RNA polymerase sigma factor SigS (sigS) from Staphylococcus aureus (strain Mu50 / ATCC 700699).